Here is a 75-residue protein sequence, read N- to C-terminus: Small ribosomal subunit protein bS18 (75 aa).

The protein belongs to the bacterial ribosomal protein bS18 family. As to quaternary structure, part of the 30S ribosomal subunit. Forms a tight heterodimer with protein bS6.

Functionally, binds as a heterodimer with protein bS6 to the central domain of the 16S rRNA, where it helps stabilize the platform of the 30S subunit. In Paracoccus denitrificans (strain Pd 1222), this protein is Small ribosomal subunit protein bS18.